We begin with the raw amino-acid sequence, 105 residues long: Cell division topological specificity factor (105 aa).

The protein belongs to the MinE family.

In terms of biological role, prevents the cell division inhibition by proteins MinC and MinD at internal division sites while permitting inhibition at polar sites. This ensures cell division at the proper site by restricting the formation of a division septum at the midpoint of the long axis of the cell. In Prochlorococcus marinus (strain MIT 9515), this protein is Cell division topological specificity factor.